A 93-amino-acid chain; its full sequence is Putative regulatory protein Cthe_1316 (93 aa).

The interval 74–93 is disordered; sequence RLNTKEAEDVEVDDEEEIDE. The segment covering 81-93 has biased composition (acidic residues); it reads EDVEVDDEEEIDE.

It belongs to the RemA family.

In Acetivibrio thermocellus (strain ATCC 27405 / DSM 1237 / JCM 9322 / NBRC 103400 / NCIMB 10682 / NRRL B-4536 / VPI 7372) (Clostridium thermocellum), this protein is Putative regulatory protein Cthe_1316.